The primary structure comprises 385 residues: 1-deoxy-D-xylulose 5-phosphate reductoisomerase (385 aa).

Thr11, Gly12, Ser13, Ile14, Asn39, and Asn123 together coordinate NADPH. 1-deoxy-D-xylulose 5-phosphate is bound at residue Lys124. Residue Glu125 participates in NADPH binding. Position 149 (Asp149) interacts with Mn(2+). The 1-deoxy-D-xylulose 5-phosphate site is built by Ser150, Glu151, Ser174, and His197. Glu151 contributes to the Mn(2+) binding site. Gly203 is a binding site for NADPH. The 1-deoxy-D-xylulose 5-phosphate site is built by Ser210, Asn215, Lys216, and Glu219. Glu219 is a Mn(2+) binding site.

This sequence belongs to the DXR family. Mg(2+) is required as a cofactor. It depends on Mn(2+) as a cofactor.

It carries out the reaction 2-C-methyl-D-erythritol 4-phosphate + NADP(+) = 1-deoxy-D-xylulose 5-phosphate + NADPH + H(+). It functions in the pathway isoprenoid biosynthesis; isopentenyl diphosphate biosynthesis via DXP pathway; isopentenyl diphosphate from 1-deoxy-D-xylulose 5-phosphate: step 1/6. Its function is as follows. Catalyzes the NADPH-dependent rearrangement and reduction of 1-deoxy-D-xylulose-5-phosphate (DXP) to 2-C-methyl-D-erythritol 4-phosphate (MEP). This Porphyromonas gingivalis (strain ATCC 33277 / DSM 20709 / CIP 103683 / JCM 12257 / NCTC 11834 / 2561) protein is 1-deoxy-D-xylulose 5-phosphate reductoisomerase.